Reading from the N-terminus, the 253-residue chain is Ubiquinone/menaquinone biosynthesis C-methyltransferase UbiE (253 aa).

Residues T76, D97, 125 to 126 (NA), and S142 each bind S-adenosyl-L-methionine.

This sequence belongs to the class I-like SAM-binding methyltransferase superfamily. MenG/UbiE family.

It carries out the reaction a 2-demethylmenaquinol + S-adenosyl-L-methionine = a menaquinol + S-adenosyl-L-homocysteine + H(+). The enzyme catalyses a 2-methoxy-6-(all-trans-polyprenyl)benzene-1,4-diol + S-adenosyl-L-methionine = a 5-methoxy-2-methyl-3-(all-trans-polyprenyl)benzene-1,4-diol + S-adenosyl-L-homocysteine + H(+). It functions in the pathway quinol/quinone metabolism; menaquinone biosynthesis; menaquinol from 1,4-dihydroxy-2-naphthoate: step 2/2. Its pathway is cofactor biosynthesis; ubiquinone biosynthesis. Methyltransferase required for the conversion of demethylmenaquinol (DMKH2) to menaquinol (MKH2) and the conversion of 2-polyprenyl-6-methoxy-1,4-benzoquinol (DDMQH2) to 2-polyprenyl-3-methyl-6-methoxy-1,4-benzoquinol (DMQH2). This is Ubiquinone/menaquinone biosynthesis C-methyltransferase UbiE from Xanthomonas campestris pv. campestris (strain ATCC 33913 / DSM 3586 / NCPPB 528 / LMG 568 / P 25).